A 68-amino-acid chain; its full sequence is Large ribosomal subunit protein uL29 (68 aa).

The protein belongs to the universal ribosomal protein uL29 family.

The sequence is that of Large ribosomal subunit protein uL29 from Finegoldia magna (strain ATCC 29328 / DSM 20472 / WAL 2508) (Peptostreptococcus magnus).